The sequence spans 218 residues: 3,4-dihydroxy-2-butanone 4-phosphate synthase (218 aa).

D-ribulose 5-phosphate-binding positions include R38–E39, D43, R151–T155, and E175. E39 is a Mg(2+) binding site. The tract at residues P125–R151 is disordered. A Mg(2+)-binding site is contributed by H154.

The protein belongs to the DHBP synthase family. In terms of assembly, homodimer. The cofactor is Mg(2+). It depends on Mn(2+) as a cofactor.

The catalysed reaction is D-ribulose 5-phosphate = (2S)-2-hydroxy-3-oxobutyl phosphate + formate + H(+). It participates in cofactor biosynthesis; riboflavin biosynthesis; 2-hydroxy-3-oxobutyl phosphate from D-ribulose 5-phosphate: step 1/1. In terms of biological role, catalyzes the conversion of D-ribulose 5-phosphate to formate and 3,4-dihydroxy-2-butanone 4-phosphate. The protein is 3,4-dihydroxy-2-butanone 4-phosphate synthase of Vibrio parahaemolyticus serotype O3:K6 (strain RIMD 2210633).